Consider the following 319-residue polypeptide: Probable cytochrome c oxidase subunit 2 (319 aa).

A signal peptide spans 1-33 (MSPNGSDRSPRRPMRRKLLQALTAGLVLATATG). 2 helical membrane passes run 63-83 (WAAA…ATIF) and 101-121 (MPIE…LFYF). 4 residues coordinate Cu cation: His-227, Cys-262, Cys-266, and His-270.

It belongs to the cytochrome c oxidase subunit 2 family. Cu cation serves as cofactor. Heme is required as a cofactor.

It localises to the cell membrane. It catalyses the reaction 4 Fe(II)-[cytochrome c] + O2 + 8 H(+)(in) = 4 Fe(III)-[cytochrome c] + 2 H2O + 4 H(+)(out). Functionally, subunits I and II form the functional core of the enzyme complex. Electrons originating in cytochrome c are transferred via heme a and Cu(A) to the binuclear center formed by heme a3 and Cu(B). The sequence is that of Probable cytochrome c oxidase subunit 2 (ctaC) from Streptomyces avermitilis (strain ATCC 31267 / DSM 46492 / JCM 5070 / NBRC 14893 / NCIMB 12804 / NRRL 8165 / MA-4680).